Reading from the N-terminus, the 215-residue chain is NADH-quinone oxidoreductase subunit C (215 aa).

The protein belongs to the complex I 30 kDa subunit family. NDH-1 is composed of 14 different subunits. Subunits NuoB, C, D, E, F, and G constitute the peripheral sector of the complex.

The protein resides in the cell inner membrane. The catalysed reaction is a quinone + NADH + 5 H(+)(in) = a quinol + NAD(+) + 4 H(+)(out). NDH-1 shuttles electrons from NADH, via FMN and iron-sulfur (Fe-S) centers, to quinones in the respiratory chain. The immediate electron acceptor for the enzyme in this species is believed to be ubiquinone. Couples the redox reaction to proton translocation (for every two electrons transferred, four hydrogen ions are translocated across the cytoplasmic membrane), and thus conserves the redox energy in a proton gradient. The chain is NADH-quinone oxidoreductase subunit C from Francisella philomiragia subsp. philomiragia (strain ATCC 25017 / CCUG 19701 / FSC 153 / O#319-036).